A 458-amino-acid polypeptide reads, in one-letter code: Bifunctional protein GlmU (458 aa).

The tract at residues 1–230 is pyrophosphorylase; the sequence is MHKRTAVVLA…EREILGINSR (230 aa). Residues 9 to 12, K23, Q73, and 78 to 79 each bind UDP-N-acetyl-alpha-D-glucosamine; these read LAAG and GT. D103 provides a ligand contact to Mg(2+). UDP-N-acetyl-alpha-D-glucosamine contacts are provided by G140, E155, N170, and N228. N228 contributes to the Mg(2+) binding site. The segment at 231 to 251 is linker; sequence VQLAEAEAVLQDRLRRKWMDA. The N-acetyltransferase stretch occupies residues 252–458; that stretch reads GVTLIDPPSV…FLGRKHKGSQ (207 aa). Residues R333 and K351 each coordinate UDP-N-acetyl-alpha-D-glucosamine. H363 functions as the Proton acceptor in the catalytic mechanism. UDP-N-acetyl-alpha-D-glucosamine contacts are provided by Y366 and N377. Acetyl-CoA contacts are provided by residues A380, 386 to 387, S405, A423, and R440; that span reads NY.

The protein in the N-terminal section; belongs to the N-acetylglucosamine-1-phosphate uridyltransferase family. This sequence in the C-terminal section; belongs to the transferase hexapeptide repeat family. As to quaternary structure, homotrimer. Mg(2+) serves as cofactor.

The protein resides in the cytoplasm. The catalysed reaction is alpha-D-glucosamine 1-phosphate + acetyl-CoA = N-acetyl-alpha-D-glucosamine 1-phosphate + CoA + H(+). The enzyme catalyses N-acetyl-alpha-D-glucosamine 1-phosphate + UTP + H(+) = UDP-N-acetyl-alpha-D-glucosamine + diphosphate. It functions in the pathway nucleotide-sugar biosynthesis; UDP-N-acetyl-alpha-D-glucosamine biosynthesis; N-acetyl-alpha-D-glucosamine 1-phosphate from alpha-D-glucosamine 6-phosphate (route II): step 2/2. The protein operates within nucleotide-sugar biosynthesis; UDP-N-acetyl-alpha-D-glucosamine biosynthesis; UDP-N-acetyl-alpha-D-glucosamine from N-acetyl-alpha-D-glucosamine 1-phosphate: step 1/1. It participates in bacterial outer membrane biogenesis; LPS lipid A biosynthesis. Functionally, catalyzes the last two sequential reactions in the de novo biosynthetic pathway for UDP-N-acetylglucosamine (UDP-GlcNAc). The C-terminal domain catalyzes the transfer of acetyl group from acetyl coenzyme A to glucosamine-1-phosphate (GlcN-1-P) to produce N-acetylglucosamine-1-phosphate (GlcNAc-1-P), which is converted into UDP-GlcNAc by the transfer of uridine 5-monophosphate (from uridine 5-triphosphate), a reaction catalyzed by the N-terminal domain. The protein is Bifunctional protein GlmU of Heliobacterium modesticaldum (strain ATCC 51547 / Ice1).